A 472-amino-acid polypeptide reads, in one-letter code: ESX-3 secretion system protein EccD3 (472 aa).

The next 11 membrane-spanning stretches (helical) occupy residues W121–A141, L155–I175, G183–P203, V211–A231, V236–A256, L258–V278, Q327–V347, P349–L369, A381–T401, V405–A425, and G450–L470.

This sequence belongs to the EccD/Snm4 family. In terms of assembly, part of the ESX-3 / type VII secretion system (T7SS), which is composed of cytosolic and membrane components. The ESX-3 membrane complex is composed of EccB3, EccC3, EccD3 and EccE3.

It localises to the cell inner membrane. Part of the ESX-3 specialized secretion system, which is important for iron and zinc uptake or homeostasis. The chain is ESX-3 secretion system protein EccD3 from Mycobacterium tuberculosis (strain CDC 1551 / Oshkosh).